An 84-amino-acid chain; its full sequence is M-zodatoxin-Lt2b (84 aa).

The first 22 residues, 1-22, serve as a signal peptide directing secretion; sequence MKYFVIALALAVALVCIAESTA. A propeptide spanning residues 23–58 is cleaved from the precursor; that stretch reads YEVNEELENELDDLDDAAWLAVAEELQGLEDFEESR. Residues 55 to 58 carry the Processing quadruplet motif motif; sequence EESR.

Post-translationally, cleavage of the propeptide depends on the processing quadruplet motif (XXXR, with at least one of X being E). In terms of tissue distribution, expressed by the venom gland.

The protein localises to the secreted. Has antimicrobial activity against both Gram-positive and Gram-negative bacteria, and yeasts. Also has a strong hemolytic activity against rabbit erythrocytes. Causes paralysis, but is not lethal when injected into insect (M.domestica) larvae. In Lachesana tarabaevi (Spider), this protein is M-zodatoxin-Lt2b.